Here is a 320-residue protein sequence, read N- to C-terminus: Methionyl-tRNA formyltransferase (320 aa).

Position 111–114 (111–114 (SLLP)) interacts with (6S)-5,6,7,8-tetrahydrofolate.

Belongs to the Fmt family.

The catalysed reaction is L-methionyl-tRNA(fMet) + (6R)-10-formyltetrahydrofolate = N-formyl-L-methionyl-tRNA(fMet) + (6S)-5,6,7,8-tetrahydrofolate + H(+). Functionally, attaches a formyl group to the free amino group of methionyl-tRNA(fMet). The formyl group appears to play a dual role in the initiator identity of N-formylmethionyl-tRNA by promoting its recognition by IF2 and preventing the misappropriation of this tRNA by the elongation apparatus. The sequence is that of Methionyl-tRNA formyltransferase from Methylacidiphilum infernorum (isolate V4) (Methylokorus infernorum (strain V4)).